The following is a 1430-amino-acid chain: Gag-Pol polyprotein (1430 aa).

Gly-2 is lipidated: N-myristoyl glycine; by host. The tract at residues Val-7–Leu-31 is interaction with Gp41. An interaction with host CALM1 region spans residues Leu-8–Arg-43. Residues Lys-12–Ile-19 form an interaction with host AP3D1 region. Residues Asp-14–His-33 form an interaction with membrane phosphatidylinositol 4,5-bisphosphate and RNA region. The Nuclear export signal signature appears at Trp-16–Lys-22. The Nuclear localization signal motif lies at Lys-26–Lys-32. An interaction with membrane phosphatidylinositol 4,5-bisphosphate region spans residues Glu-73–Ser-77. The interval Gln-105 to Val-124 is disordered. Tyr-128 carries the post-translational modification Phosphotyrosine; by host. The interval Asn-185–Gln-223 is interaction with human PPIA/CYPA and NUP153. Positions Tyr-273–Leu-359 are dimerization/Multimerization of capsid protein p24. CCHC-type zinc fingers lie at residues Val-385 to Ala-402 and Lys-406 to Glu-423. The interval Ala-440–Ser-479 is disordered. A compositionally biased stretch (polar residues) spans Ser-445–Ala-454. Residues Pro-484 to Leu-488 form a dimerization of protease region. One can recognise a Peptidase A2 domain in the interval Arg-503–Leu-572. Asp-508 serves as the catalytic For protease activity; shared with dimeric partner. 2 dimerization of protease regions span residues Gly-532–Lys-538 and Asn-571–Pro-583. In terms of domain architecture, Reverse transcriptase spans Glu-626–Leu-816. Residues Asp-692, Asp-767, and Asp-768 each coordinate Mg(2+). Positions Phe-809 to His-817 are RT 'primer grip'. The Tryptophan repeat motif motif lies at Trp-980–Trp-996. The region spanning Ile-1016–Arg-1139 is the RNase H type-1 domain. The Mg(2+) site is built by Asp-1025, Glu-1060, Asp-1080, and Asp-1131. The Integrase-type zinc finger occupies Asp-1145–Gln-1186. Residues His-1154, His-1158, Cys-1182, and Cys-1185 each contribute to the Zn(2+) site. The Integrase catalytic domain maps to Val-1196–Ile-1346. Residues Asp-1206, Asp-1258, and Glu-1294 each contribute to the Mg(2+) site. Residues Phe-1365 to Asp-1412 constitute a DNA-binding region (integrase-type).

Homotrimer; further assembles as hexamers of trimers. Interacts with gp41 (via C-terminus). Interacts with host CALM1; this interaction induces a conformational change in the Matrix protein, triggering exposure of the myristate group. Interacts with host AP3D1; this interaction allows the polyprotein trafficking to multivesicular bodies during virus assembly. Part of the pre-integration complex (PIC) which is composed of viral genome, matrix protein, Vpr and integrase. In terms of assembly, homodimer; the homodimer further multimerizes as homohexamers or homopentamers. Interacts with human PPIA/CYPA; This interaction stabilizes the capsid. Interacts with human NUP153. Interacts with host PDZD8; this interaction stabilizes the capsid. Interacts with monkey TRIM5; this interaction destabilizes the capsid. As to quaternary structure, homodimer, whose active site consists of two apposed aspartic acid residues. Heterodimer of p66 RT and p51 RT (RT p66/p51). Heterodimerization of RT is essential for DNA polymerase activity. The overall folding of the subdomains is similar in p66 RT and p51 RT but the spatial arrangements of the subdomains are dramatically different. In terms of assembly, homotetramer; may further associate as a homohexadecamer. Part of the pre-integration complex (PIC) which is composed of viral genome, matrix protein, Vpr and integrase. Interacts with human SMARCB1/INI1 and human PSIP1/LEDGF isoform 1. Interacts with human KPNA3; this interaction might play a role in nuclear import of the pre-integration complex. Interacts with human NUP153; this interaction might play a role in nuclear import of the pre-integration complex. The cofactor is Mg(2+). Post-translationally, specific enzymatic cleavages by the viral protease yield mature proteins. The protease is released by autocatalytic cleavage. The polyprotein is cleaved during and after budding, this process is termed maturation. Proteolytic cleavage of p66 RT removes the RNase H domain to yield the p51 RT subunit. Nucleocapsid protein p7 might be further cleaved after virus entry. In terms of processing, tyrosine phosphorylated presumably in the virion by a host kinase. Phosphorylation is apparently not a major regulator of membrane association. Phosphorylated possibly by host MAPK1; this phosphorylation is necessary for Pin1-mediated virion uncoating. Post-translationally, methylated by host PRMT6, impairing its function by reducing RNA annealing and the initiation of reverse transcription.

It localises to the host cell membrane. It is found in the host endosome. The protein resides in the host multivesicular body. The protein localises to the virion membrane. Its subcellular location is the host nucleus. It localises to the host cytoplasm. It is found in the virion. It catalyses the reaction Specific for a P1 residue that is hydrophobic, and P1' variable, but often Pro.. It carries out the reaction Endohydrolysis of RNA in RNA/DNA hybrids. Three different cleavage modes: 1. sequence-specific internal cleavage of RNA. Human immunodeficiency virus type 1 and Moloney murine leukemia virus enzymes prefer to cleave the RNA strand one nucleotide away from the RNA-DNA junction. 2. RNA 5'-end directed cleavage 13-19 nucleotides from the RNA end. 3. DNA 3'-end directed cleavage 15-20 nucleotides away from the primer terminus.. The enzyme catalyses 3'-end directed exonucleolytic cleavage of viral RNA-DNA hybrid.. The catalysed reaction is DNA(n) + a 2'-deoxyribonucleoside 5'-triphosphate = DNA(n+1) + diphosphate. With respect to regulation, protease: The viral protease is inhibited by many synthetic protease inhibitors (PIs), such as amprenavir, atazanavir, indinavir, loprinavir, nelfinavir, ritonavir and saquinavir. Use of protease inhibitors in tritherapy regimens permit more ambitious therapeutic strategies. Reverse transcriptase/ribonuclease H: RT can be inhibited either by nucleoside RT inhibitors (NRTIs) or by non nucleoside RT inhibitors (NNRTIs). NRTIs act as chain terminators, whereas NNRTIs inhibit DNA polymerization by binding a small hydrophobic pocket near the RT active site and inducing an allosteric change in this region. Classical NRTIs are abacavir, adefovir (PMEA), didanosine (ddI), lamivudine (3TC), stavudine (d4T), tenofovir (PMPA), zalcitabine (ddC), and zidovudine (AZT). Classical NNRTIs are atevirdine (BHAP U-87201E), delavirdine, efavirenz (DMP-266), emivirine (I-EBU), and nevirapine (BI-RG-587). The tritherapies used as a basic effective treatment of AIDS associate two NRTIs and one NNRTI. Functionally, mediates, with Gag polyprotein, the essential events in virion assembly, including binding the plasma membrane, making the protein-protein interactions necessary to create spherical particles, recruiting the viral Env proteins, and packaging the genomic RNA via direct interactions with the RNA packaging sequence (Psi). Gag-Pol polyprotein may regulate its own translation, by the binding genomic RNA in the 5'-UTR. At low concentration, the polyprotein would promote translation, whereas at high concentration, the polyprotein would encapsidate genomic RNA and then shut off translation. Its function is as follows. Targets the polyprotein to the plasma membrane via a multipartite membrane-binding signal, that includes its myristoylated N-terminus. Matrix protein is part of the pre-integration complex. Implicated in the release from host cell mediated by Vpu. Binds to RNA. In terms of biological role, forms the conical core that encapsulates the genomic RNA-nucleocapsid complex in the virion. Most core are conical, with only 7% tubular. The core is constituted by capsid protein hexamer subunits. The core is disassembled soon after virion entry. Host restriction factors such as TRIM5-alpha or TRIMCyp bind retroviral capsids and cause premature capsid disassembly, leading to blocks in reverse transcription. Capsid restriction by TRIM5 is one of the factors which restricts HIV-1 to the human species. Host PIN1 apparently facilitates the virion uncoating. On the other hand, interactions with PDZD8 or CYPA stabilize the capsid. Encapsulates and protects viral dimeric unspliced genomic RNA (gRNA). Binds these RNAs through its zinc fingers. Acts as a nucleic acid chaperone which is involved in rearangement of nucleic acid secondary structure during gRNA retrotranscription. Also facilitates template switch leading to recombination. As part of the polyprotein, participates in gRNA dimerization, packaging, tRNA incorporation and virion assembly. Functionally, aspartyl protease that mediates proteolytic cleavages of Gag and Gag-Pol polyproteins during or shortly after the release of the virion from the plasma membrane. Cleavages take place as an ordered, step-wise cascade to yield mature proteins. This process is called maturation. Displays maximal activity during the budding process just prior to particle release from the cell. Also cleaves Nef and Vif, probably concomitantly with viral structural proteins on maturation of virus particles. Hydrolyzes host EIF4GI and PABP1 in order to shut off the capped cellular mRNA translation. The resulting inhibition of cellular protein synthesis serves to ensure maximal viral gene expression and to evade host immune response. Also mediates cleavage of host YTHDF3. Mediates cleavage of host CARD8, thereby activating the CARD8 inflammasome, leading to the clearance of latent HIV-1 in patient CD4(+) T-cells after viral reactivation; in contrast, HIV-1 can evade CARD8-sensing when its protease remains inactive in infected cells prior to viral budding. Its function is as follows. Multifunctional enzyme that converts the viral RNA genome into dsDNA in the cytoplasm, shortly after virus entry into the cell. This enzyme displays a DNA polymerase activity that can copy either DNA or RNA templates, and a ribonuclease H (RNase H) activity that cleaves the RNA strand of RNA-DNA heteroduplexes in a partially processive 3' to 5' endonucleasic mode. Conversion of viral genomic RNA into dsDNA requires many steps. A tRNA(3)-Lys binds to the primer-binding site (PBS) situated at the 5'-end of the viral RNA. RT uses the 3' end of the tRNA primer to perform a short round of RNA-dependent minus-strand DNA synthesis. The reading proceeds through the U5 region and ends after the repeated (R) region which is present at both ends of viral RNA. The portion of the RNA-DNA heteroduplex is digested by the RNase H, resulting in a ssDNA product attached to the tRNA primer. This ssDNA/tRNA hybridizes with the identical R region situated at the 3' end of viral RNA. This template exchange, known as minus-strand DNA strong stop transfer, can be either intra- or intermolecular. RT uses the 3' end of this newly synthesized short ssDNA to perform the RNA-dependent minus-strand DNA synthesis of the whole template. RNase H digests the RNA template except for two polypurine tracts (PPTs) situated at the 5'-end and near the center of the genome. It is not clear if both polymerase and RNase H activities are simultaneous. RNase H probably can proceed both in a polymerase-dependent (RNA cut into small fragments by the same RT performing DNA synthesis) and a polymerase-independent mode (cleavage of remaining RNA fragments by free RTs). Secondly, RT performs DNA-directed plus-strand DNA synthesis using the PPTs that have not been removed by RNase H as primers. PPTs and tRNA primers are then removed by RNase H. The 3' and 5' ssDNA PBS regions hybridize to form a circular dsDNA intermediate. Strand displacement synthesis by RT to the PBS and PPT ends produces a blunt ended, linear dsDNA copy of the viral genome that includes long terminal repeats (LTRs) at both ends. In terms of biological role, catalyzes viral DNA integration into the host chromosome, by performing a series of DNA cutting and joining reactions. This enzyme activity takes place after virion entry into a cell and reverse transcription of the RNA genome in dsDNA. The first step in the integration process is 3' processing. This step requires a complex comprising the viral genome, matrix protein, Vpr and integrase. This complex is called the pre-integration complex (PIC). The integrase protein removes 2 nucleotides from each 3' end of the viral DNA, leaving recessed CA OH's at the 3' ends. In the second step, the PIC enters cell nucleus. This process is mediated through integrase and Vpr proteins, and allows the virus to infect a non dividing cell. This ability to enter the nucleus is specific of lentiviruses, other retroviruses cannot and rely on cell division to access cell chromosomes. In the third step, termed strand transfer, the integrase protein joins the previously processed 3' ends to the 5' ends of strands of target cellular DNA at the site of integration. The 5'-ends are produced by integrase-catalyzed staggered cuts, 5 bp apart. A Y-shaped, gapped, recombination intermediate results, with the 5'-ends of the viral DNA strands and the 3' ends of target DNA strands remaining unjoined, flanking a gap of 5 bp. The last step is viral DNA integration into host chromosome. This involves host DNA repair synthesis in which the 5 bp gaps between the unjoined strands are filled in and then ligated. Since this process occurs at both cuts flanking the HIV genome, a 5 bp duplication of host DNA is produced at the ends of HIV-1 integration. Alternatively, Integrase may catalyze the excision of viral DNA just after strand transfer, this is termed disintegration. The polypeptide is Gag-Pol polyprotein (gag-pol) (Human immunodeficiency virus type 1 group M subtype F2 (isolate MP255) (HIV-1)).